The primary structure comprises 312 residues: MDIIFYHPTFDTQWWIEALRKAIPQARVRAWKSGDNDSADYALVWHPPVEMLAGRDLKAVFALGAGVDSILSKLQAHPEMLKPSVPLFRLEDTGMGEQMQEYAVSQVLHWFRRFDDYRIQQNSSHWQPLPEYHREDFTIGILGAGVLGSKVAQSLQTWRFPLRCWSRTRKSWPGVQSFAGREELSAFLSQCRVLINLLPNTPETVGIINQQLLEKLPDGAYLLNLARGVHVVEDDLLAALDSGKVKGAMLDVFNREPLPPESPLWQHPRVTITPHVAAITRPAEAVEYISRTIAQLEKGERLCGQVDRARGY.

The active site involves R227. H275 serves as the catalytic Proton donor.

It belongs to the D-isomer specific 2-hydroxyacid dehydrogenase family. GhrA subfamily.

It is found in the cytoplasm. The enzyme catalyses glycolate + NADP(+) = glyoxylate + NADPH + H(+). The catalysed reaction is (R)-glycerate + NAD(+) = 3-hydroxypyruvate + NADH + H(+). It carries out the reaction (R)-glycerate + NADP(+) = 3-hydroxypyruvate + NADPH + H(+). Its function is as follows. Catalyzes the NADPH-dependent reduction of glyoxylate and hydroxypyruvate into glycolate and glycerate, respectively. This is Glyoxylate/hydroxypyruvate reductase A from Escherichia coli (strain UTI89 / UPEC).